Consider the following 476-residue polypeptide: Serine/threonine-protein kinase Chk1 (476 aa).

The tract at residues 1–265 is interaction with CLSPN; the sequence is MAVPFVEDWD…IPDIKKDRWY (265 aa). A Protein kinase domain is found at 9 to 265; it reads WDLVQTLGEG…IPDIKKDRWY (257 aa). ATP contacts are provided by residues 15–23 and Lys-38; that span reads LGEGAYGEV. Asp-130 functions as the Proton acceptor in the catalytic mechanism. Lys-132 is covalently cross-linked (Glycyl lysine isopeptide (Lys-Gly) (interchain with G-Cter in ubiquitin)). A disordered region spans residues 270-327; the sequence is KKGAKRPRVTSGGVSESPSGFSKHIQSNLDFSPVNSASSEENVKYSSSQPEPRTGLSL. A phosphoserine mark is found at Ser-280, Ser-286, Ser-296, and Ser-301. Residues 281–320 show a composition bias toward polar residues; it reads GGVSESPSGFSKHIQSNLDFSPVNSASSEENVKYSSSQPE. Ser-317 is modified (phosphoserine; by ATM and ATR). Position 331 is a phosphoserine (Ser-331). Ser-345 carries the post-translational modification Phosphoserine; by ATM and ATR. The tract at residues 391-476 is autoinhibitory region; that stretch reads QCLKETCEKL…SSQKIWLPAT (86 aa). Lys-436 participates in a covalent cross-link: Glycyl lysine isopeptide (Lys-Gly) (interchain with G-Cter in ubiquitin). Residues Ser-467 and Ser-468 each carry the phosphoserine modification.

The protein belongs to the protein kinase superfamily. CAMK Ser/Thr protein kinase family. NIM1 subfamily. In terms of assembly, interacts (phosphorylated by ATR) with RAD51. Interacts with and phosphorylates CLSPN, an adapter protein that regulates the ATR-dependent phosphorylation of CHEK1. Interacts with BRCA1. Interacts with and phosphorylates CDC25A, CDC25B and CDC25C. Interacts with FBXO6, which regulates CHEK1. Interacts with PPM1D, which regulates CHEK1 through dephosphorylation. Interacts with TIMELESS; DNA damage-dependent. Interacts with FEM1B; activates CHEK1 in response to stress. Interacts with TLK1. Interacts with XPO1 and YWHAZ. Interacts with CDK5RAP3; antagonizes CHEK1. Isoform 1 associates with isoform 2, the interaction is disrupted upon phosphorylation by ATR. Phosphorylated by ATR in a RAD17-dependent manner in response to ultraviolet irradiation and inhibition of DNA replication. Phosphorylated by ATM in response to ionizing irradiation. ATM and ATR can both phosphorylate Ser-317 and Ser-345 and this results in enhanced kinase activity. Phosphorylation at Ser-345 induces a change in the conformation of the protein, activates the kinase activity and is a prerequisite for interaction with FBXO6 and subsequent ubiquitination at Lys-436. Phosphorylation at Ser-345 also increases binding to 14-3-3 proteins and promotes nuclear retention. Conversely, dephosphorylation at Ser-345 by PPM1D may contribute to exit from checkpoint mediated cell cycle arrest. Phosphorylation at Ser-280 by AKT1/PKB, may promote mono and/or diubiquitination. Also phosphorylated at undefined residues during mitotic arrest, resulting in decreased activity. Post-translationally, ubiquitinated. Mono or diubiquitination promotes nuclear exclusion. The activated form (phosphorylated on Ser-345) is polyubiquitinated at Lys-436 by some SCF-type E3 ubiquitin ligase complex containing FBXO6 promoting its degradation. Ubiquitination and degradation are required to terminate the checkpoint and ensure that activated CHEK1 does not accumulate as cells progress through S phase, when replication forks encounter transient impediments during normal DNA replication. 'Lys-63'-mediated ubiquitination by TRAF4 at Lys-132 activates cell cycle arrest and activation of DNA repair. In terms of processing, proteolytically cleaved at the C-terminus by SPRTN during normal DNA replication, thereby promoting CHEK1 removal from chromatin and activating the protein kinase activity. As to expression, expressed ubiquitously with the most abundant expression in thymus, testis, small intestine and colon.

The protein resides in the nucleus. Its subcellular location is the chromosome. The protein localises to the cytoplasm. It localises to the cytoskeleton. It is found in the microtubule organizing center. The protein resides in the centrosome. The enzyme catalyses L-seryl-[protein] + ATP = O-phospho-L-seryl-[protein] + ADP + H(+). It carries out the reaction L-threonyl-[protein] + ATP = O-phospho-L-threonyl-[protein] + ADP + H(+). Activated through phosphorylation predominantly by ATR but also by ATM in response to DNA damage or inhibition of DNA replication. Activation is modulated by several mediators including CLSPN, BRCA1 and FEM1B. Proteolytic cleavage at the C-terminus by SPRTN during normal DNA replication activates the protein kinase activity. Functionally, serine/threonine-protein kinase which is required for checkpoint-mediated cell cycle arrest and activation of DNA repair in response to the presence of DNA damage or unreplicated DNA. May also negatively regulate cell cycle progression during unperturbed cell cycles. This regulation is achieved by a number of mechanisms that together help to preserve the integrity of the genome. Recognizes the substrate consensus sequence [R-X-X-S/T]. Binds to and phosphorylates CDC25A, CDC25B and CDC25C. Phosphorylation of CDC25A at 'Ser-178' and 'Thr-507' and phosphorylation of CDC25C at 'Ser-216' creates binding sites for 14-3-3 proteins which inhibit CDC25A and CDC25C. Phosphorylation of CDC25A at 'Ser-76', 'Ser-124', 'Ser-178', 'Ser-279' and 'Ser-293' promotes proteolysis of CDC25A. Phosphorylation of CDC25A at 'Ser-76' primes the protein for subsequent phosphorylation at 'Ser-79', 'Ser-82' and 'Ser-88' by NEK11, which is required for polyubiquitination and degradation of CDCD25A. Inhibition of CDC25 leads to increased inhibitory tyrosine phosphorylation of CDK-cyclin complexes and blocks cell cycle progression. Also phosphorylates NEK6. Binds to and phosphorylates RAD51 at 'Thr-309', which promotes the release of RAD51 from BRCA2 and enhances the association of RAD51 with chromatin, thereby promoting DNA repair by homologous recombination. Phosphorylates multiple sites within the C-terminus of TP53, which promotes activation of TP53 by acetylation and promotes cell cycle arrest and suppression of cellular proliferation. Also promotes repair of DNA cross-links through phosphorylation of FANCE. Binds to and phosphorylates TLK1 at 'Ser-743', which prevents the TLK1-dependent phosphorylation of the chromatin assembly factor ASF1A. This may enhance chromatin assembly both in the presence or absence of DNA damage. May also play a role in replication fork maintenance through regulation of PCNA. May regulate the transcription of genes that regulate cell-cycle progression through the phosphorylation of histones. Phosphorylates histone H3.1 (to form H3T11ph), which leads to epigenetic inhibition of a subset of genes. May also phosphorylate RB1 to promote its interaction with the E2F family of transcription factors and subsequent cell cycle arrest. Phosphorylates SPRTN, promoting SPRTN recruitment to chromatin. Reduces replication stress and activates the G2/M checkpoint, by phosphorylating and inactivating PABIR1/FAM122A and promoting the serine/threonine-protein phosphatase 2A-mediated dephosphorylation and stabilization of WEE1 levels and activity. Its function is as follows. Endogenous repressor of isoform 1, interacts with, and antagonizes CHK1 to promote the S to G2/M phase transition. The chain is Serine/threonine-protein kinase Chk1 (CHEK1) from Homo sapiens (Human).